A 989-amino-acid polypeptide reads, in one-letter code: MSQWTPEFNELYTLKVAMKSGTPDAPTTQESLKAVLLHPQPLGATKSFPAEVEMINSKVGNEFSHLCDDSQKQEKDMTGNQQEQEKSGVVRKKRKSQQAGPSYVQNCVKENQEILGRRQQLETPSDEDNDSSLSECLSSPSSSLHFGGSDTVTSDEDKEVSVRHTQPVLSAKSRSHSARSHKWPRTEADPVPSLLMKRPCFHGSALRRVTCRKRLVKSSSSQRTQKQKERMLVQRKKREALAQRKYALLSSSSSSSENDLSSDSSSSSSTDGEEDLCASASENPSNPAAPSGSIDEDVVVIEASFTPQVTANEEINVTSTDSEVEIVTVGESYRSRSTLGHSRSHWSQGSSSHTGRPQESRNRSRISTVIQPLRQNAAEVVDLTVDEDEPTIVPTTSARMDSQTTSASINNSNPSTSEQASDTTSTVASSQPSTVSETEATLTSNSATGSSVGDDVRRTASSAVPESGPPAMPRLPSCCPQHSPCGGTSQSHHALAHPHSSCFQQHGHHFQHHHHHHHTPHPAVPVSPSFSDPACPVERPQVQAPCGANSSSGSSYHDQQALPVDLSNSALRTHGSGGFHGASAFDPCCPVTSSRAAVFGHQAAAAPTQPLSIDGYGSSMVAQPQPQPPPQPSLSSCRHYMPPPYASLTRPLHHQASACHHSHGNAPPQTQPPPQVDYVIPHPVHAFHSQISSHAASHPVAPPPPTHLGSTAAPIPQHLPPAHQPISHHIPAPAPSAQRLHPHEVMQRMEVQRRRMMQHPTRAHERPPPHPHRMHPNYGHGHHIHVPQTMSSHPRQAPERTAWELGIEAGVTAATYTPGALHPHLAHYHAPPRLHHLQLGALPLMVPDMAGYPHIRYISSGLDGASFRGPFRGNFEELIHLEERLGNVNRGASQGTIERCTYPHKYKKVTTDWFSQRKLHCKQDGEEGTEEDTEEKCTICLSILEEGEDVRRLPCMHLFHQVCVDQWLITNKKCPICRVDIEAQLPSES.

Glycyl lysine isopeptide (Lys-Gly) (interchain with G-Cter in SUMO2) cross-links involve residues lysine 19, lysine 33, lysine 46, lysine 58, lysine 72, lysine 86, lysine 95, and lysine 109. A disordered region spans residues 63–195 (FSHLCDDSQK…TEADPVPSLL (133 aa)). Residues 65-88 (HLCDDSQKQEKDMTGNQQEQEKSG) show a composition bias toward basic and acidic residues. A compositionally biased stretch (polar residues) spans 97–109 (QQAGPSYVQNCVK). The segment covering 110–120 (ENQEILGRRQQ) has biased composition (basic and acidic residues). The segment covering 131–144 (SSLSECLSSPSSSL) has biased composition (low complexity). Residue lysine 172 forms a Glycyl lysine isopeptide (Lys-Gly) (interchain with G-Cter in SUMO2) linkage. Residues 173–183 (SRSHSARSHKW) show a composition bias toward basic residues. Glycyl lysine isopeptide (Lys-Gly) (interchain with G-Cter in SUMO2) cross-links involve residues lysine 197 and lysine 217. A disordered region spans residues 213 to 293 (KRLVKSSSSQ…PSNPAAPSGS (81 aa)). The interaction with AXIN1 stretch occupies residues 240 to 402 (ALAQRKYALL…VPTTSARMDS (163 aa)). 2 stretches are compositionally biased toward low complexity: residues 248–270 (LLSSSSSSSENDLSSDSSSSSST) and 278–291 (ASASENPSNPAAPS). An SUMO interaction motif 1 (SIM) motif is present at residues 298–302 (VVVIE). The SUMO interaction motif 2 (SIM) motif lies at 323-329 (EVEIVTV). The tract at residues 335–367 (SRSTLGHSRSHWSQGSSSHTGRPQESRNRSRIS) is disordered. Residues 345–355 (HWSQGSSSHTG) show a composition bias toward low complexity. The short motif at 380–384 (VVDLT) is the SUMO interaction motif 3 (SIM) element. Disordered regions lie at residues 388 to 475 (DEPT…MPRL), 506 to 559 (HGHH…YHDQ), and 641 to 675 (MPPPYASLTRPLHHQASACHHSHGNAPPQTQPPPQ). A compositionally biased stretch (polar residues) spans 393–451 (VPTTSARMDSQTTSASINNSNPSTSEQASDTTSTVASSQPSTVSETEATLTSNSATGSS). Residues 506–520 (HGHHFQHHHHHHHTP) show a composition bias toward basic residues. Polar residues predominate over residues 548–558 (ANSSSGSSYHD). The ubiquitin binding stretch occupies residues 902 to 904 (YPH). Residues lysine 918 and lysine 922 each participate in a glycyl lysine isopeptide (Lys-Gly) (interchain with G-Cter in SUMO2) cross-link. Zn(2+) is bound by residues cysteine 937 and cysteine 940. An RING-type; atypical zinc finger spans residues 937–978 (CTICLSILEEGEDVRRLPCMHLFHQVCVDQWLITNKKCPICR). Residues 952-956 (RLPCM) are ubiquitin binding. Zn(2+)-binding residues include histidine 960 and cysteine 963.

The protein belongs to the Arkadia family. In terms of assembly, monomer. Interacts with SMAD6, SMAD7, AXIN1, AXIN2 and SKIL isoform SNON. Interacts with (phosphorylated) SMAD2 and SMAD3. Part of a complex containing RNF111, AXIN1 and SMAD7. Interacts (via SIM domains) with SUMO1 and SUMO2. As to expression, ubiquitously expressed.

It is found in the nucleus. It localises to the cytoplasm. The protein localises to the PML body. The enzyme catalyses S-ubiquitinyl-[E2 ubiquitin-conjugating enzyme]-L-cysteine + [acceptor protein]-L-lysine = [E2 ubiquitin-conjugating enzyme]-L-cysteine + N(6)-ubiquitinyl-[acceptor protein]-L-lysine.. It participates in protein modification; protein ubiquitination. Its activity is regulated as follows. Binds free ubiquitin non-covalently via its RING-type zinc finger. Ubiquitin-binding leads to enhance the E3 ubiquitin-protein ligase activity by stabilizing the ubiquitin-conjugating enzyme E2 (donor ubiquitin) in the 'closed' conformation and activating ubiquitin transfer. In terms of biological role, E3 ubiquitin-protein ligase required for mesoderm patterning during embryonic development. Acts as an enhancer of the transcriptional responses of the SMAD2/SMAD3 effectors, which are activated downstream of BMP. Acts by mediating ubiquitination and degradation of SMAD inhibitors such as SMAD7, inducing their proteasomal degradation and thereby enhancing the transcriptional activity of TGF-beta and BMP. In addition to enhance transcription of SMAD2/SMAD3 effectors, also regulates their turnover by mediating their ubiquitination and subsequent degradation, coupling their activation with degradation, thereby ensuring that only effectors 'in use' are degraded. Activates SMAD3/SMAD4-dependent transcription by triggering signal-induced degradation of SNON isoform of SKIL. Associates with UBE2D2 as an E2 enzyme. Specifically binds polysumoylated chains via SUMO interaction motifs (SIMs) and mediates ubiquitination of sumoylated substrates. Catalyzes 'Lys-63'-linked ubiquitination of sumoylated XPC in response to UV irradiation, promoting nucleotide excision repair. Mediates ubiquitination and degradation of sumoylated PML. The regulation of the BMP-SMAD signaling is however independent of sumoylation and is not dependent of SUMO interaction motifs (SIMs). In Mus musculus (Mouse), this protein is E3 ubiquitin-protein ligase Arkadia.